Reading from the N-terminus, the 683-residue chain is Bifunctional lysine-specific demethylase and histidyl-hydroxylase NO66 (683 aa).

The span at 1 to 26 (MHKASTSSANRANFQGNHKTQKSPNN) shows a compositional bias: polar residues. 2 disordered regions span residues 1–162 (MHKA…SPIQ) and 179–208 (AAGA…AAKS). Over residues 54–65 (LTKEQKERRKMM) the composition is skewed to basic and acidic residues. Polar residues predominate over residues 85 to 94 (IDTSASTSNK). Residues 95–108 (GKSKAARPTDRKRR) show a composition bias toward basic residues. Residues 116 to 125 (PADANNNNTK) are compositionally biased toward low complexity. Ser152 carries the phosphoserine modification. Phosphothreonine is present on Thr158. Phosphoserine is present on Ser159. Over residues 179-189 (AAGASGASGPA) the composition is skewed to low complexity. Positions 341–480 (NPSTYLVGLR…NLLEKLMPIV (140 aa)) constitute a JmjC domain. 3 residues coordinate Fe cation: His381, Asp383, and His446.

Belongs to the ROX family. NO66 subfamily. Fe(2+) serves as cofactor.

Its subcellular location is the nucleus. It catalyses the reaction N(6),N(6)-dimethyl-L-lysyl(36)-[histone H3] + 2 2-oxoglutarate + 2 O2 = L-lysyl(36)-[histone H3] + 2 formaldehyde + 2 succinate + 2 CO2. Its function is as follows. Oxygenase that can act as both a histone lysine demethylase and a ribosomal histidine hydroxylase. Specifically demethylates 'Lys-4' (H3K4me) and 'Lys-36' (H3K36me) of histone H3, thereby playing a central role in histone code. The chain is Bifunctional lysine-specific demethylase and histidyl-hydroxylase NO66 from Drosophila yakuba (Fruit fly).